The following is a 502-amino-acid chain: Glycerol kinase (502 aa).

Thr14 contacts ADP. ATP-binding residues include Thr14, Thr15, and Ser16. Thr14 is a sn-glycerol 3-phosphate binding site. ADP is bound at residue Arg18. 4 residues coordinate sn-glycerol 3-phosphate: Arg84, Glu85, Tyr136, and Asp246. Residues Arg84, Glu85, Tyr136, Asp246, and Gln247 each coordinate glycerol. Residues Thr268 and Gly311 each coordinate ADP. Positions 268, 311, 315, and 412 each coordinate ATP. ADP is bound by residues Gly412 and Asn416.

Belongs to the FGGY kinase family. In terms of assembly, homotetramer and homodimer (in equilibrium). Heterodimer with EIIA-Glc. Binds 1 zinc ion per glycerol kinase EIIA-Glc dimer. The zinc ion is important for dimerization.

It catalyses the reaction glycerol + ATP = sn-glycerol 3-phosphate + ADP + H(+). It functions in the pathway polyol metabolism; glycerol degradation via glycerol kinase pathway; sn-glycerol 3-phosphate from glycerol: step 1/1. Its activity is regulated as follows. Activity of this regulatory enzyme is affected by several metabolites. Allosterically and non-competitively inhibited by fructose 1,6-bisphosphate (FBP) and unphosphorylated phosphocarrier protein EIIA-Glc (III-Glc), an integral component of the bacterial phosphotransferase (PTS) system. Functionally, key enzyme in the regulation of glycerol uptake and metabolism. Catalyzes the phosphorylation of glycerol to yield sn-glycerol 3-phosphate. The sequence is that of Glycerol kinase from Salmonella arizonae (strain ATCC BAA-731 / CDC346-86 / RSK2980).